Consider the following 298-residue polypeptide: Acetyl-coenzyme A carboxylase carboxyl transferase subunit beta (298 aa).

One can recognise a CoA carboxyltransferase N-terminal domain in the interval 41-298 (PTIECPECHA…RIVSKLMNLP (258 aa)). C45, C48, C64, and C67 together coordinate Zn(2+). Residues 45-67 (CPECHALVTRTAIAFNAYVCPSC) form a C4-type zinc finger.

This sequence belongs to the AccD/PCCB family. Acetyl-CoA carboxylase is a heterohexamer composed of biotin carboxyl carrier protein (AccB), biotin carboxylase (AccC) and two subunits each of ACCase subunit alpha (AccA) and ACCase subunit beta (AccD). Requires Zn(2+) as cofactor.

It is found in the cytoplasm. It catalyses the reaction N(6)-carboxybiotinyl-L-lysyl-[protein] + acetyl-CoA = N(6)-biotinyl-L-lysyl-[protein] + malonyl-CoA. Its pathway is lipid metabolism; malonyl-CoA biosynthesis; malonyl-CoA from acetyl-CoA: step 1/1. Functionally, component of the acetyl coenzyme A carboxylase (ACC) complex. Biotin carboxylase (BC) catalyzes the carboxylation of biotin on its carrier protein (BCCP) and then the CO(2) group is transferred by the transcarboxylase to acetyl-CoA to form malonyl-CoA. This is Acetyl-coenzyme A carboxylase carboxyl transferase subunit beta from Acinetobacter baylyi (strain ATCC 33305 / BD413 / ADP1).